The sequence spans 657 residues: UvrABC system protein B (657 aa).

Residues 25–182 enclose the Helicase ATP-binding domain; it reads KSIKQGNEFQ…KKLIEIQYER (158 aa). 38–45 is an ATP binding site; that stretch reads GVTGSGKT. A Beta-hairpin motif is present at residues 91-114; sequence YYDYYQPEAYVPQTDTFIEKDASI. Positions 429–595 constitute a Helicase C-terminal domain; the sequence is QIDDLYTEIQ…TINKEVRELI (167 aa). A UVR domain is found at 621–656; sequence KKLIKEYTDEMKLAAKNLQFERAAQLRDKIEELKGK.

The protein belongs to the UvrB family. As to quaternary structure, forms a heterotetramer with UvrA during the search for lesions. Interacts with UvrC in an incision complex.

The protein localises to the cytoplasm. In terms of biological role, the UvrABC repair system catalyzes the recognition and processing of DNA lesions. A damage recognition complex composed of 2 UvrA and 2 UvrB subunits scans DNA for abnormalities. Upon binding of the UvrA(2)B(2) complex to a putative damaged site, the DNA wraps around one UvrB monomer. DNA wrap is dependent on ATP binding by UvrB and probably causes local melting of the DNA helix, facilitating insertion of UvrB beta-hairpin between the DNA strands. Then UvrB probes one DNA strand for the presence of a lesion. If a lesion is found the UvrA subunits dissociate and the UvrB-DNA preincision complex is formed. This complex is subsequently bound by UvrC and the second UvrB is released. If no lesion is found, the DNA wraps around the other UvrB subunit that will check the other stand for damage. This is UvrABC system protein B from Clostridium botulinum (strain Eklund 17B / Type B).